A 262-amino-acid chain; its full sequence is Steroid 5-alpha-reductase DET2 (262 aa).

The next 6 membrane-spanning stretches (helical) occupy residues 13-33, 51-71, 79-99, 113-133, 148-168, and 205-225; these read CLLT…FLQA, IAWF…FPFG, SLLL…IYPL, FPIT…YIQA, WFWW…YINI, and AIEW…GFFL.

Belongs to the steroid 5-alpha reductase family.

The protein resides in the membrane. The catalysed reaction is a 3-oxo-5alpha-steroid + NADP(+) = a 3-oxo-Delta(4)-steroid + NADPH + H(+). It carries out the reaction 5alpha-campestan-3-one + NADP(+) = campest-4-en-3-one + NADPH + H(+). It catalyses the reaction (22S,24R)-22-hydroxy-5alpha-ergostan-3-one + NADP(+) = (22S)-22-hydroxycampest-4-en-3-one + NADPH + H(+). The enzyme catalyses 3-dehydro-6-deoxoteasterone + NADP(+) = (22R,23R)-22,23-dihydroxycampest-4-en-3-one + NADPH + H(+). It participates in plant hormone biosynthesis; brassinosteroid biosynthesis. Its activity is regulated as follows. Inhibited by the 4-azasteroids 4-MA. In terms of biological role, involved in a reduction step in the biosynthesis of the plant steroid, brassinolide (BL); acts at the second step in brassinolide biosynthesis in the 5alpha-reduction of (24R)- 24-methylcholest-4-en-3-one, which is further modified to form campestanol. Can use progesterone, testosterone, androstenedione and campestenone as substrate. Also catalyzes the conversion of campest-4-en-3-one (campesta-4-en-3-one, 4-en-3-one) to campest-3-one (campesta-3-one, 3-one), of (22S,24R)-22-hydroxyergost-4-en-3-one (22-hydroxy-campesta-4-en-3-one, 22-OH-4-en-3-one) to (22S,24R)-22-hydroxy-5alpha-ergostan-3-one (22-hydroxy-campesta-3-one, 22-OH-3-one), and of (22R,23R)-22,23-dihydroxy-5alpha-campestan-3-one (22,23,diOH-4-en-3-one) to (22R,23R)-22,23-dihydroxycampest-4-en-3-one (6-deoxo3DT). Required for the brassinosteroid- (BR) dependent regulation of seed size and shape as well as embryo development. This is Steroid 5-alpha-reductase DET2 from Arabidopsis thaliana (Mouse-ear cress).